Consider the following 268-residue polypeptide: Interleukin-1 alpha (268 aa).

A propeptide spanning residues 1-112 (MAKVPDLFED…NTEEEIIKPR (112 aa)) is cleaved from the precursor. Lysine 82 is subject to N6-acetyllysine. The nuclear localization signal (NLS) stretch occupies residues 82–86 (KKRRL). At serine 87 the chain carries Phosphoserine. N-linked (GlcNAc...) asparagine glycans are attached at residues asparagine 102 and asparagine 141.

It belongs to the IL-1 family. In terms of assembly, monomer. Interacts with TMED10; the interaction mediates the translocation from the cytoplasm into the ERGIC (endoplasmic reticulum-Golgi intermediate compartment) and thereby secretion. Interacts with IL1R1. Interacts with S100A13; this interaction is the first step in the export of IL1A, followed by direct translocation of this complex across the plasma membrane. Post-translationally, acetylated within its nuclear localization sequence, which impacts subcellular localization. Proteolytic processed by CAPN1 in a calcium-dependent manner. Cleavage from 31 kDa precursor to 18 kDa biologically active molecules. In terms of processing, phosphorylated. Phosphorylation greatly enhances susceptibility to digestion and promotes the conversion of pre-IL1A alpha to the biologically active IL1A.

It localises to the nucleus. The protein resides in the cytoplasm. The protein localises to the secreted. In terms of biological role, cytokine constitutively present intracellularly in nearly all resting non-hematopoietic cells that plays an important role in inflammation and bridges the innate and adaptive immune systems. After binding to its receptor IL1R1 together with its accessory protein IL1RAP, forms the high affinity interleukin-1 receptor complex. Signaling involves the recruitment of adapter molecules such as MYD88, IRAK1 or IRAK4. In turn, mediates the activation of NF-kappa-B and the three MAPK pathways p38, p42/p44 and JNK pathways. Within the cell, acts as an alarmin and cell death results in its liberation in the extracellular space after disruption of the cell membrane to induce inflammation and alert the host to injury or damage. In addition to its role as a danger signal, which occurs when the cytokine is passively released by cell necrosis, directly senses DNA damage and acts as signal for genotoxic stress without loss of cell integrity. This chain is Interleukin-1 alpha (IL1A), found in Bos taurus (Bovine).